The following is a 957-amino-acid chain: Glycine dehydrogenase (decarboxylating) (957 aa).

K708 bears the N6-(pyridoxal phosphate)lysine mark.

This sequence belongs to the GcvP family. As to quaternary structure, the glycine cleavage system is composed of four proteins: P, T, L and H. Requires pyridoxal 5'-phosphate as cofactor.

It catalyses the reaction N(6)-[(R)-lipoyl]-L-lysyl-[glycine-cleavage complex H protein] + glycine + H(+) = N(6)-[(R)-S(8)-aminomethyldihydrolipoyl]-L-lysyl-[glycine-cleavage complex H protein] + CO2. In terms of biological role, the glycine cleavage system catalyzes the degradation of glycine. The P protein binds the alpha-amino group of glycine through its pyridoxal phosphate cofactor; CO(2) is released and the remaining methylamine moiety is then transferred to the lipoamide cofactor of the H protein. In Escherichia coli O8 (strain IAI1), this protein is Glycine dehydrogenase (decarboxylating).